The sequence spans 309 residues: MKIVFMGTPDFAVPSLKSLINEFGVEAVFTQPDRPKGRGKKLGMSPVKEVALEHNIPVYQPLRLKNEPETIEELKNMEPDFIIVVAFGQILPKEVLDIPKYGCINLHASLLPKFRGAAPLNWSIIKGEKVTGNTTMLMDVGLDTGDMLLKDEVEITDNMTAGELHDILMERGGELLVRTIKGILNNEITPEKQNEEETCYAPMLNKEIAKIDWSLSAQDIHNLVRGLNPWPVALTSYDDITMKVHQTRVEKGDSNKEPGTIISVDKTGIKVSTGKDILVIEKLQFPNSKQLFVEQFINGNSVEIGKVLK.

Position 109–112 (109–112 (SLLP)) interacts with (6S)-5,6,7,8-tetrahydrofolate.

This sequence belongs to the Fmt family.

The catalysed reaction is L-methionyl-tRNA(fMet) + (6R)-10-formyltetrahydrofolate = N-formyl-L-methionyl-tRNA(fMet) + (6S)-5,6,7,8-tetrahydrofolate + H(+). Functionally, attaches a formyl group to the free amino group of methionyl-tRNA(fMet). The formyl group appears to play a dual role in the initiator identity of N-formylmethionyl-tRNA by promoting its recognition by IF2 and preventing the misappropriation of this tRNA by the elongation apparatus. This chain is Methionyl-tRNA formyltransferase, found in Clostridium perfringens (strain 13 / Type A).